A 257-amino-acid polypeptide reads, in one-letter code: tRNA-cytidine(32) 2-sulfurtransferase (257 aa).

The short motif at 37 to 42 (SGGKDS) is the PP-loop motif element. Residues Cys112, Cys115, and Cys202 each contribute to the [4Fe-4S] cluster site.

The protein belongs to the TtcA family. As to quaternary structure, homodimer. It depends on Mg(2+) as a cofactor. The cofactor is [4Fe-4S] cluster.

The protein localises to the cytoplasm. It carries out the reaction cytidine(32) in tRNA + S-sulfanyl-L-cysteinyl-[cysteine desulfurase] + AH2 + ATP = 2-thiocytidine(32) in tRNA + L-cysteinyl-[cysteine desulfurase] + A + AMP + diphosphate + H(+). Its pathway is tRNA modification. In terms of biological role, catalyzes the ATP-dependent 2-thiolation of cytidine in position 32 of tRNA, to form 2-thiocytidine (s(2)C32). The sulfur atoms are provided by the cysteine/cysteine desulfurase (IscS) system. This Geobacter metallireducens (strain ATCC 53774 / DSM 7210 / GS-15) protein is tRNA-cytidine(32) 2-sulfurtransferase.